Reading from the N-terminus, the 381-residue chain is Probable serine/threonine-protein kinase PBL22 (381 aa).

A lipid anchor (S-palmitoyl cysteine) is attached at Cys3. Thr64 is modified (phosphothreonine). The region spanning 75 to 351 is the Protein kinase domain; that stretch reads FREGNIIGKG…GDVVVAFEYI (277 aa). ATP contacts are provided by residues 81-89 and Lys103; that span reads IGKGGFGSV. Residue Tyr148 is modified to Phosphotyrosine. Catalysis depends on Asp201, which acts as the Proton acceptor. Ser235 is modified (phosphoserine). A phosphothreonine mark is found at Thr236 and Thr241. Residue Tyr249 is modified to Phosphotyrosine. The disordered stretch occupies residues 361-381; it reads RRTARKSTDSNRLRRETKQSY.

Belongs to the protein kinase superfamily. Ser/Thr protein kinase family. Palmitoylation at Cys-3 and Cys-6 are required for plasma membrane location.

Its subcellular location is the cell membrane. It catalyses the reaction L-seryl-[protein] + ATP = O-phospho-L-seryl-[protein] + ADP + H(+). The enzyme catalyses L-threonyl-[protein] + ATP = O-phospho-L-threonyl-[protein] + ADP + H(+). Functionally, may be involved in plant defense signaling. This chain is Probable serine/threonine-protein kinase PBL22, found in Arabidopsis thaliana (Mouse-ear cress).